An 84-amino-acid chain; its full sequence is Cell division topological specificity factor (84 aa).

Belongs to the MinE family.

In terms of biological role, prevents the cell division inhibition by proteins MinC and MinD at internal division sites while permitting inhibition at polar sites. This ensures cell division at the proper site by restricting the formation of a division septum at the midpoint of the long axis of the cell. This chain is Cell division topological specificity factor, found in Pseudomonas syringae pv. syringae (strain B728a).